The primary structure comprises 887 residues: Alanine--tRNA ligase (887 aa).

Zn(2+) contacts are provided by H573, H577, C676, and H680.

The protein belongs to the class-II aminoacyl-tRNA synthetase family. The cofactor is Zn(2+).

The protein localises to the cytoplasm. The catalysed reaction is tRNA(Ala) + L-alanine + ATP = L-alanyl-tRNA(Ala) + AMP + diphosphate. Its function is as follows. Catalyzes the attachment of alanine to tRNA(Ala) in a two-step reaction: alanine is first activated by ATP to form Ala-AMP and then transferred to the acceptor end of tRNA(Ala). Also edits incorrectly charged Ser-tRNA(Ala) and Gly-tRNA(Ala) via its editing domain. The chain is Alanine--tRNA ligase from Corynebacterium jeikeium (strain K411).